A 354-amino-acid polypeptide reads, in one-letter code: Ion-translocating oxidoreductase complex subunit D (354 aa).

A run of 3 helical transmembrane segments spans residues 9-28 (IMLH…LYLF), 67-87 (LLSG…WIAV), and 117-137 (VALL…LPLG). Thr165 carries the FMN phosphoryl threonine modification. A run of 5 helical transmembrane segments spans residues 200–220 (GSLG…LLAL), 222–242 (IIHW…AALA), 249–269 (VHGG…ALFI), 277–297 (PISR…VFVI), and 301–321 (GNFP…VPLI).

Belongs to the NqrB/RnfD family. In terms of assembly, the complex is composed of six subunits: RnfA, RnfB, RnfC, RnfD, RnfE and RnfG. Requires FMN as cofactor.

Its subcellular location is the cell inner membrane. Part of a membrane-bound complex that couples electron transfer with translocation of ions across the membrane. This is Ion-translocating oxidoreductase complex subunit D from Stutzerimonas stutzeri (Pseudomonas stutzeri).